Consider the following 164-residue polypeptide: FMN reductase (NADH) RutF (164 aa).

It belongs to the non-flavoprotein flavin reductase family. RutF subfamily.

The catalysed reaction is FMNH2 + NAD(+) = FMN + NADH + 2 H(+). Functionally, catalyzes the reduction of FMN to FMNH2 which is used to reduce pyrimidine by RutA via the Rut pathway. The polypeptide is FMN reductase (NADH) RutF (Klebsiella variicola (strain At-22)).